A 203-amino-acid polypeptide reads, in one-letter code: WUSCHEL-related homeobox 3 (203 aa).

The homeobox; WUS-type DNA-binding region spans 4–68 (TPSTRWCPTP…NHKARERQRL (65 aa)). Disordered regions lie at residues 73 to 95 (CARH…TAAA), 109 to 135 (LHHH…QQQQ), and 180 to 203 (STSG…TSTN). The segment covering 80–91 (PSPPSSTVPPAP) has biased composition (pro residues). A compositionally biased stretch (basic residues) spans 109–118 (LHHHHHHHHP). Composition is skewed to low complexity over residues 119-135 (YAAA…QQQQ) and 190-203 (CSSS…TSTN).

The protein belongs to the WUS homeobox family.

The protein localises to the nucleus. Its function is as follows. Transcription factor which may be involved in developmental processes. In Oryza sativa subsp. indica (Rice), this protein is WUSCHEL-related homeobox 3 (WOX3).